The sequence spans 365 residues: Probable caffeine synthase 2 (365 aa).

Y19 provides a ligand contact to S-adenosyl-L-homocysteine. T26 provides a ligand contact to caffeine. S-adenosyl-L-homocysteine-binding residues include C62, D99, L100, S134, and F135. 3 residues coordinate caffeine: Y152, H155, and W156. N173 contacts Mg(2+). Residue R221 coordinates caffeine. Residues D259, F261, and N262 each contribute to the Mg(2+) site. F317 contributes to the caffeine binding site.

Belongs to the methyltransferase superfamily. Type-7 methyltransferase family. It depends on Mg(2+) as a cofactor.

The enzyme catalyses 7-methylxanthine + S-adenosyl-L-methionine = theobromine + S-adenosyl-L-homocysteine + H(+). It carries out the reaction theobromine + S-adenosyl-L-methionine = caffeine + S-adenosyl-L-homocysteine + H(+). It catalyses the reaction 1,7-dimethylxanthine + S-adenosyl-L-methionine = caffeine + S-adenosyl-L-homocysteine + H(+). It functions in the pathway alkaloid biosynthesis. Its function is as follows. May be involved in the biosynthesis of caffeine. Catalyzes the conversion of 7-methylxanthine (7mX) to theobromine and of theobromine to caffeine. Has 1-N-methylation activity. The chain is Probable caffeine synthase 2 from Camellia sinensis (Tea plant).